Here is a 176-residue protein sequence, read N- to C-terminus: Ferritin heavy chain B (176 aa).

The Ferritin-like diiron domain maps to 7 to 156; that stretch reads QNFNSDCEAA…DYITNLKRLG (150 aa). Positions 24, 59, 62, 104, and 138 each coordinate Fe cation.

The protein belongs to the ferritin family. As to quaternary structure, oligomer of 24 subunits. There are two types of subunits: L (light) chain and H (heavy) chain. The functional molecule is roughly spherical and contains a central cavity into which the insoluble mineral iron core is deposited.

The protein localises to the cytoplasm. It carries out the reaction 4 Fe(2+) + O2 + 4 H(+) = 4 Fe(3+) + 2 H2O. Its function is as follows. Stores iron in a soluble, non-toxic, readily available form. Important for iron homeostasis. Has ferroxidase activity. Iron is taken up in the ferrous form and deposited as ferric hydroxides after oxidation. The protein is Ferritin heavy chain B (fth1-b) of Xenopus laevis (African clawed frog).